A 276-amino-acid chain; its full sequence is Vitamin B12-binding protein (276 aa).

The N-terminal stretch at 1–20 (MLVIRLIACTFLFITPSLLA) is a signal peptide. The 248-residue stretch at 27–274 (RIISLAPHAT…QVCTYLKIAQ (248 aa)) folds into the Fe/B12 periplasmic-binding domain. Tyr54 contributes to the cyanocob(III)alamin binding site. A disulfide bridge links Cys187 with Cys267.

The protein belongs to the BtuF family. The complex is composed of two ATP-binding proteins (BtuD), two transmembrane proteins (BtuC) and a solute-binding protein (BtuF).

The protein localises to the periplasm. Functionally, part of the ABC transporter complex BtuCDF involved in vitamin B12 import. Binds vitamin B12 and delivers it to the periplasmic surface of BtuC. This Vibrio cholerae serotype O1 (strain ATCC 39541 / Classical Ogawa 395 / O395) protein is Vitamin B12-binding protein.